Reading from the N-terminus, the 79-residue chain is Large ribosomal subunit protein uL29 (79 aa).

It belongs to the universal ribosomal protein uL29 family.

This chain is Large ribosomal subunit protein uL29, found in Tropheryma whipplei (strain Twist) (Whipple's bacillus).